Consider the following 207-residue polypeptide: Guanylate kinase (207 aa).

A Guanylate kinase-like domain is found at 4-184; sequence GTLYIVSAPS…ALSDLKTIIR (181 aa). 11–18 contributes to the ATP binding site; that stretch reads APSGAGKS.

Belongs to the guanylate kinase family.

The protein localises to the cytoplasm. It catalyses the reaction GMP + ATP = GDP + ADP. Functionally, essential for recycling GMP and indirectly, cGMP. This chain is Guanylate kinase, found in Salmonella paratyphi A (strain ATCC 9150 / SARB42).